Here is a 582-residue protein sequence, read N- to C-terminus: Vacuolar basic amino acid transporter 5 (582 aa).

Over 1 to 44 (MEETKYSSQQEIEGACGSDASLNARGSNDSPMGLSLYLCLASLT) the chain is Cytoplasmic. A helical transmembrane segment spans residues 45-65 (LVLFITALDILIVGTIIDVVA). Topologically, residues 66–80 (EQFGNYSKTGWLVTG) are vacuolar. N-linked (GlcNAc...) asparagine glycosylation occurs at Asn-70. Residues 81 to 101 (YSLPNAILSLIWGRFASIIGF) form a helical membrane-spanning segment. Residues 102–104 (QHS) are Cytoplasmic-facing. A helical transmembrane segment spans residues 105–125 (LILAILIFEAGSLIAALASSM). Residues 126–132 (NMLIFGR) lie on the Vacuolar side of the membrane. Residues 133–153 (VVAGVGGSGLQTLCFVIGCTM) traverse the membrane as a helical segment. Residues 154 to 160 (VGERSRP) lie on the Cytoplasmic side of the membrane. A helical transmembrane segment spans residues 161–181 (LVISILSCAFAVAAIVGPIIG). The Vacuolar portion of the chain corresponds to 182–191 (GAFTTHVTWR). A helical membrane pass occupies residues 192-212 (WCFYINLPIGGLAIIMFLLTY). Over 213 to 256 (KAENKGILQQIKDAIGTISSFTFSKFRHQVNFKRLMNGIIFKFD) the chain is Cytoplasmic. The helical transmembrane segment at 257–277 (FFGFALCSAGLVLFLLGLTFG) threads the bilayer. Topologically, residues 278–287 (GNKYSWNSGQ) are vacuolar. The chain crosses the membrane as a helical span at residues 288-308 (VITYLVLGVLLFIFSLVYDFF). At 309–329 (LFDKFNPEPDNISYRPLLLRR) the chain is on the cytoplasmic side. Residues 330 to 350 (LVAKPAIIIVNMVTFLLCTGY) form a helical membrane-spanning segment. At 351–372 (NGQMIYSVQFFQLIFASSAWKA) the chain is on the vacuolar side. The helical transmembrane segment at 373 to 393 (GLHLIPIVITNVIAAIASGVI) threads the bilayer. Over 394 to 401 (TKKLGLVK) the chain is Cytoplasmic. A helical membrane pass occupies residues 402 to 422 (PLLIFGGVLGVIGAGLMTLMT). N-linked (GlcNAc...) asparagine glycosylation is present at Asn-423. Over 423 to 430 (NTSTKSTQ) the chain is Vacuolar. A helical transmembrane segment spans residues 431–451 (IGVLLLPGFSLGFALQASLMS). At 452–469 (AQLQITKDRPEAAMDFIE) the chain is on the cytoplasmic side. Residues 470 to 492 (VTAFNTFMKSLGTTLGGVLSTTV) traverse the membrane as a helical segment. Over 493 to 539 (FSASFHNKVSRAHLEPYEGKTVDDMILYRLQNYDGSHSTIGNILSDS) the chain is Vacuolar. A helical membrane pass occupies residues 540-560 (IKNVFWMDLGFYALGFLFCSF). Residues 561–582 (SSNKKLIIPKKDDTPEDNLEDK) lie on the Cytoplasmic side of the membrane.

It belongs to the major facilitator superfamily.

It is found in the vacuole membrane. Functionally, transporter required for vacuolar uptake of basic amino acids. In Saccharomyces cerevisiae (strain ATCC 204508 / S288c) (Baker's yeast), this protein is Vacuolar basic amino acid transporter 5 (VBA5).